The following is a 334-amino-acid chain: Dipeptide transport ATP-binding protein DppF (334 aa).

One can recognise an ABC transporter domain in the interval 13–262; it reads LQAIDLKKHY…PRHPYTQALL (250 aa). An ATP-binding site is contributed by 55–62; sequence GESGCGKS.

This sequence belongs to the ABC transporter superfamily. In terms of assembly, the complex is composed of two ATP-binding proteins (DppD and DppF), two transmembrane proteins (DppB and DppC) and a solute-binding protein (DppA). MppA can replace DppA as binding protein for heme and ALA transport.

The protein localises to the cell inner membrane. It catalyses the reaction a dipeptide(out) + ATP + H2O = a dipeptide(in) + ADP + phosphate + H(+). Its function is as follows. Part of the ABC transporter DppABCDF involved in dipeptide transport. Responsible for energy coupling to the transport system. In terms of biological role, when a foreign outer membrane heme receptor is expressed in E.coli, DppABCDF can also transport heme and its precursor, 5-aminolevulinic acid (ALA), from the periplasm into the cytoplasm. This Escherichia coli (strain K12) protein is Dipeptide transport ATP-binding protein DppF (dppF).